A 713-amino-acid chain; its full sequence is Glutamine--fructose-6-phosphate aminotransferase [isomerizing] (713 aa).

C2 serves as the catalytic For GATase activity. Positions 2–316 (CGIFGYVNFL…DDDIAHIYDG (315 aa)) constitute a Glutamine amidotransferase type-2 domain. SIS domains lie at 389 to 528 (WLST…DSIS) and 561 to 703 (CNSS…VDFP).

As to quaternary structure, homotetramer.

It catalyses the reaction D-fructose 6-phosphate + L-glutamine = D-glucosamine 6-phosphate + L-glutamate. Its pathway is nucleotide-sugar biosynthesis; UDP-N-acetyl-alpha-D-glucosamine biosynthesis; alpha-D-glucosamine 6-phosphate from D-fructose 6-phosphate: step 1/1. Functionally, involved in amino sugar synthesis (formation of chitin, supplies the amino sugars of asparagine-linked oligosaccharides of glycoproteins). The chain is Glutamine--fructose-6-phosphate aminotransferase [isomerizing] (GFA1) from Candida albicans (strain SC5314 / ATCC MYA-2876) (Yeast).